The chain runs to 151 residues: SsrA-binding protein (151 aa).

The tract at residues 132-151 (KRQTIKKRDQDREIHRKYGI) is disordered.

Belongs to the SmpB family.

It is found in the cytoplasm. Required for rescue of stalled ribosomes mediated by trans-translation. Binds to transfer-messenger RNA (tmRNA), required for stable association of tmRNA with ribosomes. tmRNA and SmpB together mimic tRNA shape, replacing the anticodon stem-loop with SmpB. tmRNA is encoded by the ssrA gene; the 2 termini fold to resemble tRNA(Ala) and it encodes a 'tag peptide', a short internal open reading frame. During trans-translation Ala-aminoacylated tmRNA acts like a tRNA, entering the A-site of stalled ribosomes, displacing the stalled mRNA. The ribosome then switches to translate the ORF on the tmRNA; the nascent peptide is terminated with the 'tag peptide' encoded by the tmRNA and targeted for degradation. The ribosome is freed to recommence translation, which seems to be the essential function of trans-translation. The sequence is that of SsrA-binding protein from Lactobacillus johnsonii (strain CNCM I-12250 / La1 / NCC 533).